Reading from the N-terminus, the 301-residue chain is 5'-adenylylsulfate reductase-like 5 (301 aa).

The signal sequence occupies residues 1–21 (MTRCAVVAAVAAVLLVAGAAA). Residues 51-164 (CIRIEPSPPV…LVDFYKETTG (114 aa)) enclose the Thioredoxin domain. Residue Asn-139 is glycosylated (N-linked (GlcNAc...) asparagine). Residues 201–221 (FVLLAVLFIILKVAAHFVPIV) form a helical membrane-spanning segment. Asn-268 carries an N-linked (GlcNAc...) asparagine glycan.

Its subcellular location is the membrane. This Oryza sativa subsp. japonica (Rice) protein is 5'-adenylylsulfate reductase-like 5 (APRL5).